The primary structure comprises 454 residues: Cerebellar degeneration-related protein 2 (454 aa).

2 coiled-coil regions span residues 44-142 (ELED…SGQG) and 192-265 (EEEN…QSEH). The disordered stretch occupies residues 134–153 (EELKSSGQGRRSPGKCDQEK). S311 carries the phosphoserine modification. Positions 346 to 380 (LHEVDTQYSALKVKYEELLKKCQEEQDSLSHKAVQ) form a coiled coil.

This sequence belongs to the CDR2 family.

The sequence is that of Cerebellar degeneration-related protein 2 (CDR2) from Homo sapiens (Human).